Consider the following 1163-residue polypeptide: Type IV pilus biogenesis factor PilY1 (1163 aa).

The N-terminal stretch at M1–A30 is a signal peptide. The disordered stretch occupies residues S329–Y352. Residues D600, D602, N604, and D608 each contribute to the Ca(2+) site. Residues R619–D621 form an integrin-binding motif RGD region. D851, N853, D855, V857, and D859 together coordinate Ca(2+). A disordered region spans residues S1138–N1163.

It belongs to the PilY1 family. In terms of assembly, interacts (via C-terminal 532-1163) with host integrins alpha-V/beta-3 (ITGAV/ITGB3) and alpha-V/beta-5 (ITGAV/ITGB5).

It localises to the fimbrium. The protein resides in the membrane. It is found in the cytoplasm. Its subcellular location is the cytosol. Its function is as follows. Involved in pilus assembly, twitching motility and adhesion to host cells. Primes type IV pili (T4P) assembly and is required for inclusion of minor pilins PilV, PilW and PilX to the surface pili. Stabilizes assembled pilus fibers likely by antagonizing retraction mediated by PilT. Calcium-binding and calcium release by PilY1 seem to be essential for twitching motility and for regulation of pilus retraction dynamics of PilT. Adhesin for human tissue specifically recognizing a host receptor localized or enriched on basolateral epithelial cell surfaces. Binds host integrins in an calcium-dependent manner in vitro and this interaction may be employed by the bacterium to mediate host epithelial cell binding in vivo. The chain is Type IV pilus biogenesis factor PilY1 from Pseudomonas aeruginosa (strain PAK).